Reading from the N-terminus, the 260-residue chain is Cytochrome c oxidase subunit 3 (260 aa).

Transmembrane regions (helical) follow at residues Leu41 to Ile61, Gly81 to Phe101, Thr133 to Gly153, Ala161 to Ile181, Phe196 to Val216, and Ala238 to Trp258.

The protein belongs to the cytochrome c oxidase subunit 3 family. In terms of assembly, component of the cytochrome c oxidase (complex IV, CIV), a multisubunit enzyme composed of a catalytic core of 3 subunits and several supernumerary subunits. The complex exists as a monomer or a dimer and forms supercomplexes (SCs) in the inner mitochondrial membrane with ubiquinol-cytochrome c oxidoreductase (cytochrome b-c1 complex, complex III, CIII).

It is found in the mitochondrion inner membrane. The enzyme catalyses 4 Fe(II)-[cytochrome c] + O2 + 8 H(+)(in) = 4 Fe(III)-[cytochrome c] + 2 H2O + 4 H(+)(out). Functionally, component of the cytochrome c oxidase, the last enzyme in the mitochondrial electron transport chain which drives oxidative phosphorylation. The respiratory chain contains 3 multisubunit complexes succinate dehydrogenase (complex II, CII), ubiquinol-cytochrome c oxidoreductase (cytochrome b-c1 complex, complex III, CIII) and cytochrome c oxidase (complex IV, CIV), that cooperate to transfer electrons derived from NADH and succinate to molecular oxygen, creating an electrochemical gradient over the inner membrane that drives transmembrane transport and the ATP synthase. Cytochrome c oxidase is the component of the respiratory chain that catalyzes the reduction of oxygen to water. Electrons originating from reduced cytochrome c in the intermembrane space (IMS) are transferred via the dinuclear copper A center (CU(A)) of subunit 2 and heme A of subunit 1 to the active site in subunit 1, a binuclear center (BNC) formed by heme A3 and copper B (CU(B)). The BNC reduces molecular oxygen to 2 water molecules using 4 electrons from cytochrome c in the IMS and 4 protons from the mitochondrial matrix. The protein is Cytochrome c oxidase subunit 3 (COIII) of Strongylocentrotus purpuratus (Purple sea urchin).